The chain runs to 382 residues: S-adenosylmethionine synthase (382 aa).

Histidine 16 is an ATP binding site. Residue aspartate 18 participates in Mg(2+) binding. Glutamate 44 is a binding site for K(+). 2 residues coordinate L-methionine: glutamate 57 and glutamine 100. A flexible loop region spans residues 100 to 110; the sequence is QSADIAMGVDE. Residues 165-167, aspartate 240, 246-247, alanine 263, and lysine 267 contribute to the ATP site; these read DAK and RK. Position 240 (aspartate 240) interacts with L-methionine. Position 271 (lysine 271) interacts with L-methionine.

Belongs to the AdoMet synthase family. As to quaternary structure, homotetramer; dimer of dimers. Mg(2+) serves as cofactor. K(+) is required as a cofactor.

The protein localises to the cytoplasm. The catalysed reaction is L-methionine + ATP + H2O = S-adenosyl-L-methionine + phosphate + diphosphate. Its pathway is amino-acid biosynthesis; S-adenosyl-L-methionine biosynthesis; S-adenosyl-L-methionine from L-methionine: step 1/1. In terms of biological role, catalyzes the formation of S-adenosylmethionine (AdoMet) from methionine and ATP. The overall synthetic reaction is composed of two sequential steps, AdoMet formation and the subsequent tripolyphosphate hydrolysis which occurs prior to release of AdoMet from the enzyme. The chain is S-adenosylmethionine synthase from Saccharophagus degradans (strain 2-40 / ATCC 43961 / DSM 17024).